The following is a 75-amino-acid chain: Exodeoxyribonuclease 7 small subunit (75 aa).

Belongs to the XseB family. Heterooligomer composed of large and small subunits.

It localises to the cytoplasm. It carries out the reaction Exonucleolytic cleavage in either 5'- to 3'- or 3'- to 5'-direction to yield nucleoside 5'-phosphates.. In terms of biological role, bidirectionally degrades single-stranded DNA into large acid-insoluble oligonucleotides, which are then degraded further into small acid-soluble oligonucleotides. The chain is Exodeoxyribonuclease 7 small subunit from Thermotoga maritima (strain ATCC 43589 / DSM 3109 / JCM 10099 / NBRC 100826 / MSB8).